A 162-amino-acid chain; its full sequence is NADPH-dependent 7-cyano-7-deazaguanine reductase (162 aa).

The active-site Thioimide intermediate is the cysteine 53. Aspartate 60 functions as the Proton donor in the catalytic mechanism. Substrate-binding positions include 75 to 77 and 94 to 95; these read VES and HE.

This sequence belongs to the GTP cyclohydrolase I family. QueF type 1 subfamily.

The protein localises to the cytoplasm. The catalysed reaction is 7-aminomethyl-7-carbaguanine + 2 NADP(+) = 7-cyano-7-deazaguanine + 2 NADPH + 3 H(+). The protein operates within tRNA modification; tRNA-queuosine biosynthesis. Functionally, catalyzes the NADPH-dependent reduction of 7-cyano-7-deazaguanine (preQ0) to 7-aminomethyl-7-deazaguanine (preQ1). This is NADPH-dependent 7-cyano-7-deazaguanine reductase from Exiguobacterium sp. (strain ATCC BAA-1283 / AT1b).